We begin with the raw amino-acid sequence, 270 residues long: Cytochrome c oxidase subunit 3 (270 aa).

A run of 7 helical transmembrane segments spans residues 22-42 (PWPIVVSFSLLSLALSLGLTM), 46-66 (IGEMYLVNLALLVVLGSGVLW), 88-108 (INIGFLLFVLSEVLIFSALFW), 128-148 (VGITAVQPTELPLLNTIILLA), 168-188 (SLSGLLITTWLIIIFVICQYI), 205-225 (VFFAGTGLHFLHMVMLAIMLA), and 248-268 (IIYLHVLDVIWLFLYIVFYWW).

This sequence belongs to the cytochrome c oxidase subunit 3 family. As to quaternary structure, component of the cytochrome c oxidase (complex IV, CIV), a multisubunit enzyme composed of a catalytic core of 3 subunits and several supernumerary subunits. The complex exists as a monomer or a dimer and forms supercomplexes (SCs) in the inner mitochondrial membrane with ubiquinol-cytochrome c oxidoreductase (cytochrome b-c1 complex, complex III, CIII).

It is found in the mitochondrion inner membrane. The enzyme catalyses 4 Fe(II)-[cytochrome c] + O2 + 8 H(+)(in) = 4 Fe(III)-[cytochrome c] + 2 H2O + 4 H(+)(out). Its function is as follows. Component of the cytochrome c oxidase, the last enzyme in the mitochondrial electron transport chain which drives oxidative phosphorylation. The respiratory chain contains 3 multisubunit complexes succinate dehydrogenase (complex II, CII), ubiquinol-cytochrome c oxidoreductase (cytochrome b-c1 complex, complex III, CIII) and cytochrome c oxidase (complex IV, CIV), that cooperate to transfer electrons derived from NADH and succinate to molecular oxygen, creating an electrochemical gradient over the inner membrane that drives transmembrane transport and the ATP synthase. Cytochrome c oxidase is the component of the respiratory chain that catalyzes the reduction of oxygen to water. Electrons originating from reduced cytochrome c in the intermembrane space (IMS) are transferred via the dinuclear copper A center (CU(A)) of subunit 2 and heme A of subunit 1 to the active site in subunit 1, a binuclear center (BNC) formed by heme A3 and copper B (CU(B)). The BNC reduces molecular oxygen to 2 water molecules using 4 electrons from cytochrome c in the IMS and 4 protons from the mitochondrial matrix. This is Cytochrome c oxidase subunit 3 (COX3) from Vanderwaltozyma polyspora (strain ATCC 22028 / DSM 70294 / BCRC 21397 / CBS 2163 / NBRC 10782 / NRRL Y-8283 / UCD 57-17) (Kluyveromyces polysporus).